The chain runs to 235 residues: Probable inactive serine protease 37 (235 aa).

The N-terminal stretch at 1 to 19 is a signal peptide; sequence MKFIFYLSVLTGTFLFADS. A Peptidase S1 domain is found at 20–233; the sequence is SVQKEDPAPY…YVSWIENTAK (214 aa). 3 cysteine pairs are disulfide-bonded: C40–C56, C131–C198, and C163–C177.

This sequence belongs to the peptidase S1 family.

The protein resides in the cytoplasmic vesicle. It is found in the secretory vesicle. The protein localises to the acrosome. It localises to the secreted. Plays a role in male fertility. May have a role in sperm migration or binding to zona-intact eggs. Involved in the activation of the proacrosin/acrosin system. This is Probable inactive serine protease 37 from Macaca fascicularis (Crab-eating macaque).